We begin with the raw amino-acid sequence, 323 residues long: Trihelix transcription factor GT-3a (323 aa).

Residues 1 to 20 (MDRRNPFQHHHHHHQLHHHL) show a composition bias toward basic residues. A disordered region spans residues 1 to 51 (MDRRNPFQHHHHHHQLHHHLIQQQQLPPPPLSTTATMDPGGGGGGGERIPQ). Residues 52 to 108 (WSIEETKELLAIREELDQTFMETKRNKLLWEVVAAKMADKGFVRSAEQCKSKWKNLV) enclose the Myb-like domain. Disordered regions lie at residues 147 to 176 (EATE…EPNQ), 190 to 220 (KRET…GTKA), and 269 to 297 (ELEE…ARAQ). A compositionally biased stretch (acidic residues) spans 164–176 (SDDEEEEVDEPNQ).

Homodimer. Heterodimer with GT-3B. Predominantly expressed in roots and flower buds.

The protein localises to the nucleus. In terms of biological role, probable transcription factor that binds specifically to the core DNA sequence 5'-GTTAC-3'. This Arabidopsis thaliana (Mouse-ear cress) protein is Trihelix transcription factor GT-3a (GT-3A).